The chain runs to 615 residues: uncharacterized protein (615 aa).

Composition is skewed to polar residues over residues 1–11, 41–55, and 128–140; these read MSETSSNSPAS, LSQN…SSKV, and TSGS…NAPP. Disordered regions lie at residues 1–61 and 97–149; these read MSET…QALV and HQNH…KASS. A phosphoserine mark is found at Ser149 and Ser152. Residues 181–217 form a disordered region; it reads LIHPEQTDRGLPYAPDEKFHNSGSLKLPKGASLEDLS. Phosphoserine occurs at positions 219 and 275. Disordered regions lie at residues 266-481, 493-565, and 586-615; these read KPLA…KFTG, RLQK…KPSF, and GVET…TEEQ. Residues 272-283 show a composition bias toward polar residues; it reads RQRSTADLTESD. Residues Thr276 and Thr297 each carry the phosphothreonine modification. The segment covering 312-323 has biased composition (basic and acidic residues); that stretch reads EAEKGFYTKDGE. Low complexity predominate over residues 356 to 376; that stretch reads PSLSSASQPSAASSSSSSEPS. The span at 505-522 shows a compositional bias: polar residues; sequence PNKSKSPSGTKSPASGET. Thr514 is subject to Phosphothreonine. At Ser516 the chain carries Phosphoserine. Over residues 586–599 the composition is skewed to basic and acidic residues; the sequence is GVETRKEVEPKEEA. Positions 600–615 are enriched in acidic residues; the sequence is VIPEEDVEVEVETEEQ.

This is an uncharacterized protein from Schizosaccharomyces pombe (strain 972 / ATCC 24843) (Fission yeast).